A 147-amino-acid chain; its full sequence is uncharacterized protein (147 aa).

This is an uncharacterized protein from Mycoplasma pneumoniae (strain ATCC 29342 / M129 / Subtype 1) (Mycoplasmoides pneumoniae).